The chain runs to 446 residues: Glutamyl-tRNA reductase (446 aa).

Substrate is bound by residues 49 to 52 (TCNR), Ser-109, 114 to 116 (ETQ), and Gln-120. Cys-50 (nucleophile) is an active-site residue. 189–194 (GAGKMG) is a binding site for NADP(+).

Belongs to the glutamyl-tRNA reductase family. In terms of assembly, homodimer.

The enzyme catalyses (S)-4-amino-5-oxopentanoate + tRNA(Glu) + NADP(+) = L-glutamyl-tRNA(Glu) + NADPH + H(+). The protein operates within porphyrin-containing compound metabolism; protoporphyrin-IX biosynthesis; 5-aminolevulinate from L-glutamyl-tRNA(Glu): step 1/2. In terms of biological role, catalyzes the NADPH-dependent reduction of glutamyl-tRNA(Glu) to glutamate 1-semialdehyde (GSA). The sequence is that of Glutamyl-tRNA reductase from Priestia megaterium (Bacillus megaterium).